The chain runs to 338 residues: Isopentenyl-diphosphate delta-isomerase (338 aa).

13-14 (RK) is a binding site for substrate. FMN is bound by residues 72 to 74 (AMT), Ser-102, and Asn-130. 102 to 104 (SQR) serves as a coordination point for substrate. Substrate is bound at residue Gln-165. Glu-166 lines the Mg(2+) pocket. Residues Lys-197, Thr-227, 274–276 (GIR), and 295–296 (AR) contribute to the FMN site.

It belongs to the IPP isomerase type 2 family. As to quaternary structure, homooctamer. Dimer of tetramers. Requires FMN as cofactor. The cofactor is NADPH. It depends on Mg(2+) as a cofactor.

It is found in the cytoplasm. The catalysed reaction is isopentenyl diphosphate = dimethylallyl diphosphate. Functionally, involved in the biosynthesis of isoprenoids. Catalyzes the 1,3-allylic rearrangement of the homoallylic substrate isopentenyl (IPP) to its allylic isomer, dimethylallyl diphosphate (DMAPP). This chain is Isopentenyl-diphosphate delta-isomerase, found in Deinococcus radiodurans (strain ATCC 13939 / DSM 20539 / JCM 16871 / CCUG 27074 / LMG 4051 / NBRC 15346 / NCIMB 9279 / VKM B-1422 / R1).